A 152-amino-acid polypeptide reads, in one-letter code: Nucleoside diphosphate kinase B (152 aa).

Residues Met1–Lys66 are interaction with AKAP13. The ATP site is built by Lys12, Phe60, Arg88, Thr94, Arg105, and Asn115. His118 acts as the Pros-phosphohistidine intermediate in catalysis.

The protein belongs to the NDK family. As to quaternary structure, hexamer of two different chains: An and B (A6, A5B, A4B2, A3B3, A2B4, AB5, B6). Interacts with CAPN8. Interacts with AKAP13. Interacts with ITGB1BP1 (via C-terminal domain region). Interacts with BCL2L10. Requires Mg(2+) as cofactor.

The protein resides in the cytoplasm. The protein localises to the cell projection. Its subcellular location is the lamellipodium. It is found in the ruffle. It localises to the nucleus. The enzyme catalyses a 2'-deoxyribonucleoside 5'-diphosphate + ATP = a 2'-deoxyribonucleoside 5'-triphosphate + ADP. It catalyses the reaction a ribonucleoside 5'-diphosphate + ATP = a ribonucleoside 5'-triphosphate + ADP. The catalysed reaction is ATP + protein L-histidine = ADP + protein N-phospho-L-histidine.. In terms of biological role, major role in the synthesis of nucleoside triphosphates other than ATP. The ATP gamma phosphate is transferred to the NDP beta phosphate via a ping-pong mechanism, using a phosphorylated active-site intermediate. Negatively regulates Rho activity by interacting with AKAP13/LBC. Acts as a transcriptional activator of the MYC gene; binds DNA non-specifically. Binds to both single-stranded guanine- and cytosine-rich strands within the nuclease hypersensitive element (NHE) III(1) region of the MYC gene promoter. Does not bind to duplex NHE III(1). Has G-quadruplex (G4) DNA-binding activity, which is independent of its nucleotide-binding and kinase activity. Binds both folded and unfolded G4 with similar low nanomolar affinities. Stabilizes folded G4s regardless of whether they are prefolded or not. Exhibits histidine protein kinase activity. This chain is Nucleoside diphosphate kinase B (NME2), found in Pongo abelii (Sumatran orangutan).